The following is a 177-amino-acid chain: Large ribosomal subunit protein uL6 (177 aa).

It belongs to the universal ribosomal protein uL6 family. As to quaternary structure, part of the 50S ribosomal subunit.

Its function is as follows. This protein binds to the 23S rRNA, and is important in its secondary structure. It is located near the subunit interface in the base of the L7/L12 stalk, and near the tRNA binding site of the peptidyltransferase center. The protein is Large ribosomal subunit protein uL6 of Klebsiella pneumoniae subsp. pneumoniae (strain ATCC 700721 / MGH 78578).